Consider the following 359-residue polypeptide: 3-isopropylmalate dehydrogenase (359 aa).

76–89 (GPKWDDPSAKTRPE) contacts NAD(+). Substrate contacts are provided by Arg96, Arg106, Arg134, and Asp223. The Mg(2+) site is built by Asp223, Asp247, and Asp251. Residue 281 to 293 (GSAPDIAGKSVAN) participates in NAD(+) binding.

The protein belongs to the isocitrate and isopropylmalate dehydrogenases family. LeuB type 1 subfamily. In terms of assembly, homodimer. Requires Mg(2+) as cofactor. Mn(2+) serves as cofactor.

It is found in the cytoplasm. The catalysed reaction is (2R,3S)-3-isopropylmalate + NAD(+) = 4-methyl-2-oxopentanoate + CO2 + NADH. It functions in the pathway amino-acid biosynthesis; L-leucine biosynthesis; L-leucine from 3-methyl-2-oxobutanoate: step 3/4. Catalyzes the oxidation of 3-carboxy-2-hydroxy-4-methylpentanoate (3-isopropylmalate) to 3-carboxy-4-methyl-2-oxopentanoate. The product decarboxylates to 4-methyl-2 oxopentanoate. The polypeptide is 3-isopropylmalate dehydrogenase (Rhodopirellula baltica (strain DSM 10527 / NCIMB 13988 / SH1)).